A 311-amino-acid chain; its full sequence is CARD domain-containing protein E10 (311 aa).

Residues isoleucine 21–alanine 110 form the CARD domain. Disordered regions lie at residues glutamate 125–tyrosine 181, glycine 203–aspartate 230, and isoleucine 243–cysteine 311. A compositionally biased stretch (polar residues) spans glutamate 140–asparagine 152. Over residues serine 252–glycine 272 the composition is skewed to gly residues.

The protein resides in the host cell membrane. Its function is as follows. Activates host NF-kappa-B and JNK pathways. Induces hyperphosphorylation and redistribution of host bcl-10 from the cytoplasm to the plasma membrane. The inhibitory effect of cellular bcl-10 on NF-kappa-B pathway is then overcome allowing NF-kappa-B activation. The sequence is that of CARD domain-containing protein E10 (E10) from Equus caballus (Horse).